A 357-amino-acid polypeptide reads, in one-letter code: MSQNSNPAVVLEKVGDIAIEQRPIPTIKDPHYVKLAIKATGICGSDIHYYRSGGIGKYILKAPMVLGHESSGQVVEVGDAVTRVKVGDRVAIEPGVPSRYSDETKEGRYNLCPHMAFAATPPIDGTLVKYYLSPEDFLVKLPEGVSYEEGACVEPLSVGVHSNKLAGVRFGTKVVVFGAGPVGLLTGAVARAFGATDVIFVDVFDNKLQRAKDFGATNTFNSSQFSTDKAQDLADGVQKLLGGNHADVVFECSGADVCIDAAVKTTKVGGTMVQVGMGKNYTNFPIAEVSGKEMKLIGCFRYSFGDYRDAVNLVATGKVNVKPLITHKFKFEDAAKAYDYNIAHGGEVVKTIIFGPE.

Cysteine 43 provides a ligand contact to Zn(2+). Substrate is bound at residue tyrosine 49. Residues histidine 68 and glutamate 69 each contribute to the Zn(2+) site. Glutamate 154 is a substrate binding site. Residues aspartate 202, lysine 207, 275–277 (VGM), and 299–301 (CFR) contribute to the NAD(+) site. Residues arginine 301 and tyrosine 302 each contribute to the substrate site.

The protein belongs to the zinc-containing alcohol dehydrogenase family. As to quaternary structure, homotetramer. Zn(2+) is required as a cofactor.

The enzyme catalyses keto-D-fructose + NADH + H(+) = D-sorbitol + NAD(+). The catalysed reaction is xylitol + NAD(+) = D-xylulose + NADH + H(+). Functionally, polyol dehydrogenase that catalyzes the reversible NAD(+)-dependent oxidation of various sugar alcohols. Is active with D-sorbitol (D-glucitol) and xylitol as substrates, leading to the C2-oxidized product D-fructose and D-xylulose, respectively. Is likely involved in the utilization of D-sorbitol as a sole carbon source for growth. Has no activity on mannitol and primary alcohols such as ethanol. The sequence is that of Sorbitol dehydrogenase 1 (SOR1) from Saccharomyces cerevisiae (strain ATCC 204508 / S288c) (Baker's yeast).